A 275-amino-acid polypeptide reads, in one-letter code: MEKSEKKPMRFSFRRRPKSVSVDRSEAHAADVSIGQYLEKLNYVSQEEAIKIDQELFSEYAYSVDQLMELAGLSVATAVAKSYPRGPMPKGGTVLVCCGPGNNGGDGLVCARHLKLFGYEPSVFYPKQSNKPLFQNLTKQCQEMEVPFLSFLPDSQLVSDSYNLVVDALFGFSFKPPVRPEFNDVMDKLKKVKIPVVSIDIPSGWDVETGGDADSLQPECLVSLTAPKRCSRNFKGRFHWLGGRFVPPALAAKYELNLPPYPGTDCCLLLTPPPS.

Positions 49-258 constitute a YjeF N-terminal domain; sequence AIKIDQELFS…ALAAKYELNL (210 aa). Residue 102 to 106 coordinates (6S)-NADPHX; the sequence is NNGGD. Residues Asn103 and Asp167 each contribute to the K(+) site. (6S)-NADPHX is bound by residues 171-177 and Asp200; that span reads GFSFKPP. Position 203 (Ser203) interacts with K(+).

The protein belongs to the NnrE/AIBP family. The cofactor is K(+).

The enzyme catalyses (6R)-NADHX = (6S)-NADHX. The catalysed reaction is (6R)-NADPHX = (6S)-NADPHX. In terms of biological role, catalyzes the epimerization of the S- and R-forms of NAD(P)HX, a damaged form of NAD(P)H that is a result of enzymatic or heat-dependent hydration. This is a prerequisite for the S-specific NAD(P)H-hydrate dehydratase to allow the repair of both epimers of NAD(P)HX. This Ixodes scapularis (Black-legged tick) protein is NAD(P)H-hydrate epimerase.